The primary structure comprises 263 residues: 22 kDa alpha-zein 16 (263 aa).

The signal sequence occupies residues 1–21 (MATKILALLALLALLVSATNA).

The protein belongs to the zein family. Expressed in developing endosperm.

Its function is as follows. Zeins are major seed storage proteins. The protein is 22 kDa alpha-zein 16 of Zea mays (Maize).